The chain runs to 255 residues: uncharacterized protein (255 aa).

Residues Met1–Gly23 form the signal peptide. Cys24 carries N-palmitoyl cysteine lipidation. Cys24 carries the S-diacylglycerol cysteine lipid modification.

Belongs to the staphylococcal tandem lipoprotein family.

It is found in the cell membrane. This is an uncharacterized protein from Staphylococcus aureus (strain Mu50 / ATCC 700699).